Here is a 159-residue protein sequence, read N- to C-terminus: Succinate dehydrogenase [ubiquinone] cytochrome b small subunit, mitochondrial (159 aa).

Residues M1–H56 constitute a mitochondrion transit peptide. The Mitochondrial matrix segment spans residues S57–S63. The chain crosses the membrane as a helical span at residues L64–L85. Over N86–V90 the chain is Mitochondrial intermembrane. The chain crosses the membrane as a helical span at residues V91–V111. H102 is a binding site for heme b. The Mitochondrial matrix portion of the chain corresponds to T112–L120. Y114 contributes to the a ubiquinone binding site. Residues P121 to F142 traverse the membrane as a helical segment. The Mitochondrial intermembrane portion of the chain corresponds to N143–L159.

The protein belongs to the CybS family. As to quaternary structure, component of complex II composed of four subunits: the flavoprotein (FP) SDHA, iron-sulfur protein (IP) SDHB, and a cytochrome b560 composed of SDHC and SDHD.

The protein resides in the mitochondrion inner membrane. The protein operates within carbohydrate metabolism; tricarboxylic acid cycle. In terms of biological role, membrane-anchoring subunit of succinate dehydrogenase (SDH) that is involved in complex II of the mitochondrial electron transport chain and is responsible for transferring electrons from succinate to ubiquinone (coenzyme Q). SDH also oxidizes malate to the non-canonical enol form of oxaloacetate, enol-oxaloacetate. Enol-oxaloacetate, which is a potent inhibitor of the succinate dehydrogenase activity, is further isomerized into keto-oxaloacetate. This Mus musculus (Mouse) protein is Succinate dehydrogenase [ubiquinone] cytochrome b small subunit, mitochondrial (Sdhd).